A 92-amino-acid polypeptide reads, in one-letter code: Putative lambdoid prophage defective integrase (92 aa).

Belongs to the 'phage' integrase family.

This Escherichia coli O157:H7 protein is Putative lambdoid prophage defective integrase (intG).